The following is a 357-amino-acid chain: DNA replication and repair protein RecF (357 aa).

30-37 contributes to the ATP binding site; sequence GPNGSGKT.

Belongs to the RecF family.

It localises to the cytoplasm. In terms of biological role, the RecF protein is involved in DNA metabolism; it is required for DNA replication and normal SOS inducibility. RecF binds preferentially to single-stranded, linear DNA. It also seems to bind ATP. The protein is DNA replication and repair protein RecF of Vibrio campbellii (strain ATCC BAA-1116).